The following is a 1941-amino-acid chain: Myosin light chain kinase, smooth muscle (1941 aa).

Ig-like C2-type domains follow at residues 33–122 (PAFI…VELT) and 156–244 (PKFA…AELS). A disulfide bridge links cysteine 177 with cysteine 228. Tyrosine 226 is modified (phosphotyrosine; by ABL1). Residues 255–329 (AVRGTKAPSP…RKVPQSSILQ (75 aa)) form a disordered region. Polar residues predominate over residues 286 to 305 (NCPSPQRSGSSARATNSHLK). Position 295 is a phosphoserine (serine 295). Residues 306–320 (SPQEPKPKLCEDAPR) show a composition bias toward basic and acidic residues. Phosphoserine is present on residues serine 333 and serine 355. Ig-like C2-type domains lie at 402–485 (PRFE…GQVS), 502–587 (PSFS…ATVT), 611–699 (PIFL…AVLT), and 709–809 (PWFI…APPR). Cystine bridges form between cysteine 423–cysteine 475 and cysteine 523–cysteine 571. Position 452 is a phosphotyrosine; by ABL1 and SRC (tyrosine 452). Cysteine 730 and cysteine 793 are disulfide-bonded. At tyrosine 780 the chain carries Phosphotyrosine; by ABL1. Tandem repeats lie at residues 856–883 (DVRGLLKRRVETRLHTEEAIRQQEVGQL), 884–911 (DFRDLLGKKVSTKTVSEDDLKDIPAEQM), 912–939 (DFRANLQRQVKPKTISEEERKVHSPQQV), and 940–966 (DFRSVLAKKGTPKTPVPEKAPPKAATP). The interval 856-985 (DVRGLLKRRV…KKSPSENGGN (130 aa)) is 5 X 28 AA approximate tandem repeats. Residues 911-951 (MDFRANLQRQVKPKTISEEERKVHSPQQVDFRSVLAKKGTP) form an actin-binding (calcium/calmodulin-sensitive) region. Residues 920–1120 (QVKPKTISEE…KRPESQGSAP (201 aa)) form a disordered region. Phosphoserine is present on serine 935. A calmodulin-binding region spans residues 936–951 (PQQVDFRSVLAKKGTP). The stretch at 967-985 (DFRSVLGGKKKSPSENGGN) is one 1-5; truncated repeat. 5 consecutive repeat copies span residues 990–1002 (LNVKAGESPTPAG), 1003–1014 (DAQAIGALKPVG), 1015–1026 (NAKPAETPKPIG), 1027–1038 (NAKPTETLKPVG), and 1039–1049 (NTKPAETLKPI). Positions 990-1049 (LNVKAGESPTPAGDAQAIGALKPVGNAKPAETPKPIGNAKPTETLKPVGNTKPAETLKPI) are 5 X 12 AA approximate tandem repeats. The segment at 1048 to 1482 (PIANAQPSGS…TVTVNTEQKV (435 aa)) is actin-binding (calcium/calmodulin-insensitive). The span at 1052-1065 (AQPSGSLKPVTNAQ) shows a compositional bias: polar residues. Over residues 1085–1099 (AGKEEVKEVKNDVNC) the composition is skewed to basic and acidic residues. The Ig-like C2-type 7 domain occupies 1120-1208 (PVFKEKLQDV…GQAECSCQVT (89 aa)). An intrachain disulfide couples cysteine 1141 to cysteine 1192. The interval 1212–1257 (AQTSENTKAPEMKSRRPKSSLPPVLGTESDATVKKKPAPKTPTKAA) is disordered. One can recognise an Ig-like C2-type 8 domain in the interval 1260–1348 (PQIIQFPEDQ…GSRQAQVNLT (89 aa)). Residues 1356 to 1449 (PAGTPCASDI…ESELTAVGEK (94 aa)) enclose the Fibronectin type-III domain. Positions 1435-1469 (SEPSQESELTAVGEKPEEPKDEVEVSDDDEKEPEV) are disordered. Positions 1453–1467 (PKDEVEVSDDDEKEP) are enriched in acidic residues. Residue serine 1460 is modified to Phosphoserine. Tyrosine 1471 bears the Phosphotyrosine; by ABL1 mark. The region spanning 1486–1741 (YDIEERLGSG…CTQCLQHPWL (256 aa)) is the Protein kinase domain. Residues 1492 to 1500 (LGSGKFGQV) and lysine 1515 each bind ATP. At tyrosine 1597 the chain carries Phosphotyrosine; by ABL1. Aspartate 1607 functions as the Proton acceptor in the catalytic mechanism. Phosphotyrosine; by ABL1 is present on tyrosine 1657. A calmodulin-binding region spans residues 1733-1796 (TQCLQHPWLM…SGLSGRKSST (64 aa)). Residues serine 1781, serine 1782, serine 1794, serine 1795, and serine 1798 each carry the phosphoserine modification. A disordered region spans residues 1789–1809 (LSGRKSSTGSPTSPINAEKLE). Residues 1792 to 1803 (RKSSTGSPTSPI) are compositionally biased toward polar residues. Threonine 1800 is modified (phosphothreonine). The residue at position 1801 (serine 1801) is a Phosphoserine. An Ig-like C2-type 9 domain is found at 1831 to 1920 (PYFSKTIRDL…GEATCTAELI (90 aa)). Cysteine 1852 and cysteine 1904 are disulfide-bonded.

This sequence belongs to the protein kinase superfamily. CAMK Ser/Thr protein kinase family. In terms of assembly, all isoforms including Telokin bind calmodulin. Interacts with CTTN; this interaction is reduced during thrombin-induced endothelial cell (EC) contraction but is promoted by the barrier-protective agonist sphingosine 1-phosphate (S1P) within lamellipodia. A complex made of ABL1, CTTN and MYLK regulates cortical actin-based cytoskeletal rearrangement critical to sphingosine 1-phosphate (S1P)-mediated endothelial cell (EC) barrier enhancement. Binds to NAA10/ARD1. Interacts with SVIL and PTK2B/PYK2. Requires Mg(2+) as cofactor. The cofactor is Ca(2+). Can probably be down-regulated by phosphorylation. Tyrosine phosphorylation by ABL1 increases kinase activity, reverses MLCK-mediated inhibition of Arp2/3-mediated actin polymerization, and enhances CTTN-binding. Phosphorylation by SRC at Tyr-452 promotes CTTN binding. Post-translationally, the C-terminus is deglutamylated by AGTPBP1/CCP1, AGBL1/CCP4 and AGBL4/CCP6, leading to the formation of Myosin light chain kinase, smooth muscle, deglutamylated form. The consequences of C-terminal deglutamylation are unknown. Smooth muscle isoform is expressed in all tissues with highest levels in bladder, uterus, vas deferens, colon, ileum, and tracheae. Isoform 1 is expressed in lung, bladder, and vas deferens. Telokin is expressed in smooth muscle cells of the gut, reproductive tract and urinary tract, including in uterus, vas deferens, bladder, colon, kidney, ureter and ovary. Telokin is also detected in the trachea.

The protein resides in the cytoplasm. It is found in the cell projection. It localises to the lamellipodium. Its subcellular location is the cleavage furrow. The protein localises to the cytoskeleton. The protein resides in the stress fiber. The catalysed reaction is L-seryl-[myosin light chain] + ATP = O-phospho-L-seryl-[myosin light chain] + ADP + H(+). It catalyses the reaction L-threonyl-[myosin light chain] + ATP = O-phospho-L-threonyl-[myosin light chain] + ADP + H(+). Its function is as follows. Calcium/calmodulin-dependent myosin light chain kinase implicated in smooth muscle contraction via phosphorylation of myosin light chains (MLC). Also regulates actin-myosin interaction through a non-kinase activity. Phosphorylates PTK2B/PYK2 and myosin light-chains. Involved in the inflammatory response (e.g. apoptosis, vascular permeability, leukocyte diapedesis), cell motility and morphology, airway hyperreactivity and other activities relevant to asthma. Required for tonic airway smooth muscle contraction that is necessary for physiological and asthmatic airway resistance. Necessary for gastrointestinal motility. Implicated in the regulation of endothelial as well as vascular permeability, probably via the regulation of cytoskeletal rearrangements. In the nervous system it has been shown to control the growth initiation of astrocytic processes in culture and to participate in transmitter release at synapses formed between cultured sympathetic ganglion cells. Critical participant in signaling sequences that result in fibroblast apoptosis. Plays a role in the regulation of epithelial cell survival. Required for epithelial wound healing, especially during actomyosin ring contraction during purse-string wound closure. Mediates RhoA-dependent membrane blebbing. Triggers TRPC5 channel activity in a calcium-dependent signaling, by inducing its subcellular localization at the plasma membrane. Promotes cell migration (including tumor cells) and tumor metastasis. PTK2B/PYK2 activation by phosphorylation mediates ITGB2 activation and is thus essential to trigger neutrophil transmigration during acute lung injury (ALI). May regulate optic nerve head astrocyte migration. Probably involved in mitotic cytoskeletal regulation. Regulates tight junction probably by modulating ZO-1 exchange in the perijunctional actomyosin ring. Mediates burn-induced microvascular barrier injury; triggers endothelial contraction in the development of microvascular hyperpermeability by phosphorylating MLC. Essential for intestinal barrier dysfunction. Mediates Giardia spp.-mediated reduced epithelial barrier function during giardiasis intestinal infection via reorganization of cytoskeletal F-actin and tight junctional ZO-1. Necessary for hypotonicity-induced Ca(2+) entry and subsequent activation of volume-sensitive organic osmolyte/anion channels (VSOAC) in cervical cancer cells. The protein is Myosin light chain kinase, smooth muscle of Mus musculus (Mouse).